We begin with the raw amino-acid sequence, 348 residues long: Flavonol synthase/flavanone 3-hydroxylase (348 aa).

Residues 209–309 (EIVYLLKINY…RMSWPVFLEP (101 aa)) enclose the Fe2OG dioxygenase domain. Fe cation contacts are provided by H234, D236, and H290.

It belongs to the iron/ascorbate-dependent oxidoreductase family. L-ascorbate is required as a cofactor. Requires Fe cation as cofactor.

It is found in the cytoplasm. It catalyses the reaction a (2R,3R)-dihydroflavonol + 2-oxoglutarate + O2 = a flavonol + succinate + CO2 + H2O. The catalysed reaction is a (2S)-flavan-4-one + 2-oxoglutarate + O2 = a (2R,3R)-dihydroflavonol + succinate + CO2. It functions in the pathway secondary metabolite biosynthesis; flavonoid biosynthesis. In terms of biological role, catalyzes the formation of flavonols from dihydroflavonols. It can act on dihydrokaempferol to produce kaempferol, on dihydroquercetin to produce quercitin and on dihydromyricetin to produce myricetin. This chain is Flavonol synthase/flavanone 3-hydroxylase (FL), found in Petunia hybrida (Petunia).